The sequence spans 160 residues: Protein-export protein SecB (160 aa).

This sequence belongs to the SecB family. As to quaternary structure, homotetramer, a dimer of dimers. One homotetramer interacts with 1 SecA dimer.

It is found in the cytoplasm. Its function is as follows. One of the proteins required for the normal export of preproteins out of the cell cytoplasm. It is a molecular chaperone that binds to a subset of precursor proteins, maintaining them in a translocation-competent state. It also specifically binds to its receptor SecA. The sequence is that of Protein-export protein SecB from Agrobacterium fabrum (strain C58 / ATCC 33970) (Agrobacterium tumefaciens (strain C58)).